The primary structure comprises 310 residues: Lipoyl synthase (310 aa).

[4Fe-4S] cluster contacts are provided by cysteine 54, cysteine 59, cysteine 65, cysteine 80, cysteine 84, cysteine 87, and serine 295. In terms of domain architecture, Radical SAM core spans 66–284 (FASGTATFLI…LFGEDNLGFM (219 aa)).

The protein belongs to the radical SAM superfamily. Lipoyl synthase family. The cofactor is [4Fe-4S] cluster.

It is found in the cytoplasm. It carries out the reaction [[Fe-S] cluster scaffold protein carrying a second [4Fe-4S](2+) cluster] + N(6)-octanoyl-L-lysyl-[protein] + 2 oxidized [2Fe-2S]-[ferredoxin] + 2 S-adenosyl-L-methionine + 4 H(+) = [[Fe-S] cluster scaffold protein] + N(6)-[(R)-dihydrolipoyl]-L-lysyl-[protein] + 4 Fe(3+) + 2 hydrogen sulfide + 2 5'-deoxyadenosine + 2 L-methionine + 2 reduced [2Fe-2S]-[ferredoxin]. It functions in the pathway protein modification; protein lipoylation via endogenous pathway; protein N(6)-(lipoyl)lysine from octanoyl-[acyl-carrier-protein]: step 2/2. Functionally, catalyzes the radical-mediated insertion of two sulfur atoms into the C-6 and C-8 positions of the octanoyl moiety bound to the lipoyl domains of lipoate-dependent enzymes, thereby converting the octanoylated domains into lipoylated derivatives. The sequence is that of Lipoyl synthase from Prochlorococcus marinus (strain MIT 9215).